The primary structure comprises 420 residues: Probable pectate lyase C (420 aa).

An N-terminal signal peptide occupies residues 1-20 (MKLSEPLLVSLAAFSQAVTA). N-linked (GlcNAc...) asparagine glycosylation is found at asparagine 49, asparagine 165, and asparagine 202. Residue arginine 205 is part of the active site. The 36-residue stretch at 262–297 (NANFHGYVQNNYYDPDKDGQLDGFELGVSSSNYGGM) folds into the EF-hand domain. Residues aspartate 275, aspartate 277, aspartate 279, glutamine 281, and glutamate 286 each coordinate Ca(2+). Positions 358–396 (TMGGPGTLNGGTPAKDTDGDGIPDEAEKQLGTDPNTNDS) are disordered. N-linked (GlcNAc...) asparagine glycosylation occurs at asparagine 394.

It belongs to the polysaccharide lyase 1 family. The cofactor is Ca(2+).

It is found in the secreted. The catalysed reaction is Eliminative cleavage of (1-&gt;4)-alpha-D-galacturonan to give oligosaccharides with 4-deoxy-alpha-D-galact-4-enuronosyl groups at their non-reducing ends.. In terms of biological role, pectinolytic enzyme consist of four classes of enzymes: pectin lyase, polygalacturonase, pectin methylesterase and rhamnogalacturonase. Among pectinolytic enzymes, pectin lyase is the most important in depolymerization of pectin, since it cleaves internal glycosidic bonds of highly methylated pectins. Favors pectate, the anion, over pectin, the methyl ester. This is Probable pectate lyase C (plyC) from Aspergillus fumigatus (strain ATCC MYA-4609 / CBS 101355 / FGSC A1100 / Af293) (Neosartorya fumigata).